A 100-amino-acid polypeptide reads, in one-letter code: MELTPREKDKLLLFTAGLVAERRRARGLKLNYPEAIALISCEIMEGARDGRTVAELMSYGRTILTAEDVMEGVPEMITDIQVECTFPDGTKLVSIHDPIV.

It belongs to the urease gamma subunit family. In terms of assembly, heterotrimer of UreA (gamma), UreB (beta) and UreC (alpha) subunits. Three heterotrimers associate to form the active enzyme.

It is found in the cytoplasm. It catalyses the reaction urea + 2 H2O + H(+) = hydrogencarbonate + 2 NH4(+). Its pathway is nitrogen metabolism; urea degradation; CO(2) and NH(3) from urea (urease route): step 1/1. The chain is Urease subunit gamma from Vibrio parahaemolyticus.